Here is a 528-residue protein sequence, read N- to C-terminus: Chromosomal replication initiator protein DnaA (528 aa).

The segment at 1–104 (MNDDPNALAR…PVDDEPESEA (104 aa)) is domain I, interacts with DnaA modulators. The disordered stretch occupies residues 93–159 (AAPVDDEPES…DFEEVDDDSE (67 aa)). The segment covering 104–123 (APSRERRPDPEPVHTPRHLE) has biased composition (basic and acidic residues). A domain II region spans residues 105 to 187 (PSRERRPDPE…GPAPAATGGN (83 aa)). Residues 149-159 (TDFEEVDDDSE) show a composition bias toward acidic residues. Residues 188–404 (SLNAKYTFDT…GALIRVTAFA (217 aa)) are domain III, AAA+ region. ATP contacts are provided by Gly-232, Gly-234, Lys-235, and Thr-236. The interval 405–528 (SLNRQPLDLT…TARIKQRSKR (124 aa)) is domain IV, binds dsDNA.

This sequence belongs to the DnaA family. Oligomerizes as a right-handed, spiral filament on DNA at oriC.

The protein localises to the cytoplasm. Plays an essential role in the initiation and regulation of chromosomal replication. ATP-DnaA binds to the origin of replication (oriC) to initiate formation of the DNA replication initiation complex once per cell cycle. Binds the DnaA box (a 9 base pair repeat at the origin) and separates the double-stranded (ds)DNA. Forms a right-handed helical filament on oriC DNA; dsDNA binds to the exterior of the filament while single-stranded (ss)DNA is stabiized in the filament's interior. The ATP-DnaA-oriC complex binds and stabilizes one strand of the AT-rich DNA unwinding element (DUE), permitting loading of DNA polymerase. After initiation quickly degrades to an ADP-DnaA complex that is not apt for DNA replication. Binds acidic phospholipids. The protein is Chromosomal replication initiator protein DnaA of Rhodococcus opacus (strain B4).